We begin with the raw amino-acid sequence, 90 residues long: UPF0297 protein Swol_0469 (90 aa).

It belongs to the UPF0297 family.

The sequence is that of UPF0297 protein Swol_0469 from Syntrophomonas wolfei subsp. wolfei (strain DSM 2245B / Goettingen).